A 1025-amino-acid chain; its full sequence is MLTWFLFYFSEISCDPPPEVKNARKPYYSLPIVPGTVLRYTCSPSYRLIGEKAIFCISENQVHATWDKAPPICESVNKTISCSDPIVPGGFMNKGSKAPFRHGDSVTFTCKANFTMKGSKTVWCQANEMWGPTALPVCESDFPLECPSLPTIHNGHHTGQHVDQFVAGLSVTYSCEPGYLLTGKKTIKCLSSGDWDGVIPTCKEAQCEHPGKFPNGQVKEPLSLQVGTTVYFSCNEGYQLQGQPSSQCVIVEQKAIWTKKPVCKEILCPPPPPVRNGSHTGSFSENVPYGSTVTYTCDPSPEKGVSFTLIGEKTINCTTGSQKTGIWSGPAPYCVLSTSAVLCLQPKIKRGQILSILKDSYSYNDTVAFSCEPGFTLKGNRSIRCNAHGTWEPPVPVCEKGCQAPPKIINGQKEDSYLLNFDPGTSIRYSCDPGYLLVGEDTIHCTPEGKWTPITPQCTVAECKPVGPHLFKRPQNQFIRTAVNSSCDEGFQLSESAYQLCQGTIPWFIEIRLCKEITCPPPPVIHNGTHTWSSSEDVPYGTVVTYMCYPGPEEGVKFKLIGEQTIHCTSDSRGRGSWSSPAPLCKLSLPAVQCTDVHVENGVKLTDNKAPYFYNDSVMFKCDDGYILSGSSQIRCKANNTWDPEKPLCKKEGCEPMRVHGLPDDSHIKLVKRTCQNGYQLTGYTYEKCQNAENGTWFKKIEVCTVILCQPPPKIANGGHTGMMAKHFLYGNEVSYECDEGFYLLGEKSLQCVNDSKGHGSWSGPPPQCLQSSPLTHCPDPEVKHGYKLNKTHSAFSHNDIVHFVCNQGFIMNGSHLIRCHTNNTWLPGVPTCIRKASLGCQSPSTIPNGNHTGGSIARFPPGMSVMYSCYQGFLMAGEARLICTHEGTWSQPPPFCKEVNCSFPEDTNGIQKGFQPGKTYRFGATVTLECEDGYTLEGSPQSQCQDDSQWNPPLALCKYRRWSTIPLICGISVGSALIILMSVGFCMILKHRESNYYTKTRPKEGALHLETREVYSIDPYNPAS.

Residues 1–11 (MLTWFLFYFSE) form the signal peptide. The Sushi 1 domain occupies 12–75 (ISCDPPPEVK…WDKAPPICES (64 aa)). Over 12–963 (ISCDPPPEVK…PLALCKYRRW (952 aa)) the chain is Extracellular. 2 disulfides stabilise this stretch: Cys14-Cys56 and Cys42-Cys73. 2 N-linked (GlcNAc...) asparagine glycosylation sites follow: Asn77 and Asn113. Sushi domains are found at residues 80–140 (ISCS…VCES), 144–204 (LECP…TCKE), 205–265 (AQCE…VCKE), 266–336 (ILCP…YCVL), 341–400 (VLCL…VCEK), 401–460 (GCQA…QCTV), 461–516 (AECK…LCKE), 517–587 (ITCP…LCKL), 592–651 (VQCT…LCKK), 652–706 (EGCE…VCTV), 707–771 (ILCQ…QCLQ), 776–835 (THCP…TCIR), 839–899 (LGCQ…FCKE), and 900–960 (VNCS…LCKY). 26 disulfides stabilise this stretch: Cys82/Cys124, Cys110/Cys138, Cys146/Cys189, Cys175/Cys202, Cys207/Cys248, Cys234/Cys263, Cys268/Cys317, Cys297/Cys334, Cys343/Cys385, Cys371/Cys398, Cys402/Cys445, Cys431/Cys458, Cys463/Cys501, Cys487/Cys514, Cys519/Cys568, Cys548/Cys585, Cys594/Cys636, Cys622/Cys649, Cys654/Cys689, Cys675/Cys704, Cys709/Cys752, Cys738/Cys769, Cys778/Cys820, Cys806/Cys833, Cys841/Cys884, and Cys870/Cys897. N-linked (GlcNAc...) asparagine glycosylation is found at Asn276, Asn316, Asn364, and Asn380. Asn484 carries an N-linked (GlcNAc...) asparagine glycan. N-linked (GlcNAc...) asparagine glycosylation occurs at Asn527. N-linked (GlcNAc...) asparagine glycosylation is found at Asn615 and Asn639. Asn694 is a glycosylation site (N-linked (GlcNAc...) asparagine). 5 N-linked (GlcNAc...) asparagine glycosylation sites follow: Asn754, Asn790, Asn813, Asn823, and Asn851. Asn901 carries an N-linked (GlcNAc...) asparagine glycan. Disulfide bonds link Cys902-Cys945 and Cys931-Cys958. The helical transmembrane segment at 964–990 (STIPLICGISVGSALIILMSVGFCMIL) threads the bilayer. Residues 991–1025 (KHRESNYYTKTRPKEGALHLETREVYSIDPYNPAS) are Cytoplasmic-facing.

Belongs to the receptors of complement activation (RCA) family. In terms of assembly, interacts (via Sushi domain 1 and 2) with C3. Interacts with CD19. Part of a complex composed of CD19, CR2/CD21, CD81 and IFITM1/CD225 in the membrane of mature B-cells. Interacts (via Sushi domain 1 and 2) with FCER2 (via the C-terminus). Interacts with CD23. Interacts with FCRL5. Interacts with CR1. Interacts with INFNA1. B-lymphocytes.

The protein resides in the cell membrane. Serves as a receptor for various ligands including complement component CD3d, HNRNPU OR IFNA1. When C3d is bound to antigens, attaches to C3d on B-cell surface and thereby facilitates the recognition and uptake of antigens by B-cells. This interaction enhances B-cell activation and subsequent immune responses. Forms a complex with several partners on the surface of B-cells including CD19, FCRL5 and CD81, to form the B-cell coreceptor complex that plays a crucial role in B-cell activation and signaling. Also induces specific intracellular signaling separately from the BCR and CD19 by activating the tyrosine kinase SRC, which then phosphorylates nucleolin/NCL and triggers AKT and GSK3 kinase activities in a SYK/CD19-independent manner. Acts as a ligand for CD23 (FcepsilonRII), a low-affinity receptor for IgE, which is expressed on B-cells and other immune cells, and thus participates in the regulation of IgE production. The sequence is that of Complement receptor type 2 (Cr2) from Mus musculus (Mouse).